Consider the following 108-residue polypeptide: MMTLRDLINKLLGRETSSANTARERLQLVLAHDRVDMSSLTTDLLDKMRKEILDVVAKYVEIDFDEVAVSLETEDRMTALVANLPIKRTISGEIKFKKADKANKDIKK.

Belongs to the MinE family.

Prevents the cell division inhibition by proteins MinC and MinD at internal division sites while permitting inhibition at polar sites. This ensures cell division at the proper site by restricting the formation of a division septum at the midpoint of the long axis of the cell. This is Cell division topological specificity factor from Prochlorococcus marinus (strain AS9601).